Here is a 707-residue protein sequence, read N- to C-terminus: Elongation factor G (707 aa).

The region spanning 8–297 (ERVRNIGIAA…AVVDYLPSPV (290 aa)) is the tr-type G domain. GTP is bound by residues 17–24 (AHIDAGKT), 96–100 (DTPGH), and 150–153 (NKMD).

Belongs to the TRAFAC class translation factor GTPase superfamily. Classic translation factor GTPase family. EF-G/EF-2 subfamily.

It is found in the cytoplasm. Catalyzes the GTP-dependent ribosomal translocation step during translation elongation. During this step, the ribosome changes from the pre-translocational (PRE) to the post-translocational (POST) state as the newly formed A-site-bound peptidyl-tRNA and P-site-bound deacylated tRNA move to the P and E sites, respectively. Catalyzes the coordinated movement of the two tRNA molecules, the mRNA and conformational changes in the ribosome. This is Elongation factor G from Synechococcus sp. (strain JA-2-3B'a(2-13)) (Cyanobacteria bacterium Yellowstone B-Prime).